Reading from the N-terminus, the 297-residue chain is Transcription factor bHLH129 (297 aa).

Residues 1 to 145 (MYPPNSSKST…SSSHQEHNSL (145 aa)) are disordered. At serine 35 the chain carries Phosphoserine. Low complexity predominate over residues 68–82 (SSIGFDSNASSSSSL). Over residues 111-121 (PNGGYGGGGEQ) the composition is skewed to gly residues. Phosphoserine is present on serine 138. The 51-residue stretch at 239 to 289 (FATHPRSIAERERRTRISGKLKKLQELVPNMDKQTSYADMLDLAVEHIKGL) folds into the bHLH domain.

In terms of assembly, homodimer.

Its subcellular location is the nucleus. This Arabidopsis thaliana (Mouse-ear cress) protein is Transcription factor bHLH129 (BHLH129).